Here is a 902-residue protein sequence, read N- to C-terminus: Probable polyribonucleotide nucleotidyltransferase 1, chloroplastic (902 aa).

The transit peptide at 1 to 66 (MLATPGALHH…RRRAAGARVR (66 aa)) directs the protein to the chloroplast. The segment covering 44–53 (VAASASTSRR) has biased composition (low complexity). Positions 44–93 (VAASASTSRRGGARRRAAGARVRASVGEEAPPVVTEEASTSGGPTKFSTK) are disordered. Residues 80–91 (EASTSGGPTKFS) show a composition bias toward polar residues. Residues 693–753 (PLIHVMKVKP…SSLEKSKAII (61 aa)) form the KH domain. The S1 motif domain occupies 763-832 (GEIYRNCEIK…DKGQLRLSSR (70 aa)). Residues 833 to 902 (ALLPDANQES…ASQGSEMGTE (70 aa)) form a disordered region. Polar residues predominate over residues 839–850 (NQESSSKQQAGG). Basic and acidic residues predominate over residues 852 to 862 (TREKAPQKDNL). Residues 877-888 (EASTAENNATAS) show a composition bias toward low complexity.

This sequence belongs to the polyribonucleotide nucleotidyltransferase family.

It localises to the plastid. Its subcellular location is the chloroplast. It carries out the reaction RNA(n+1) + phosphate = RNA(n) + a ribonucleoside 5'-diphosphate. Its function is as follows. Involved in the metabolism of all major classes of plastid RNAs. Required for efficient 3'-end processing of mRNAs and 3'-end maturation of rRNA transcripts, but is not sufficient to mediate their degradation. Mediates tRNA degradation. May function as a poly(A) mRNA 3'-5' degrading phosphorylase. This chain is Probable polyribonucleotide nucleotidyltransferase 1, chloroplastic (PNP1), found in Oryza sativa subsp. japonica (Rice).